The chain runs to 263 residues: Translation initiation factor 2 subunit alpha (263 aa).

The S1 motif domain maps to 12-83; the sequence is GEILIATVKQ…RKGTIDVSLK (72 aa).

It belongs to the eIF-2-alpha family. Heterotrimer composed of an alpha, a beta and a gamma chain.

In terms of biological role, eIF-2 functions in the early steps of protein synthesis by forming a ternary complex with GTP and initiator tRNA. The chain is Translation initiation factor 2 subunit alpha from Sulfurisphaera tokodaii (strain DSM 16993 / JCM 10545 / NBRC 100140 / 7) (Sulfolobus tokodaii).